We begin with the raw amino-acid sequence, 303 residues long: Tyrosine recombinase XerC (303 aa).

The 85-residue stretch at Met-1 to Leu-85 folds into the Core-binding (CB) domain. In terms of domain architecture, Tyr recombinase spans Lys-106–Asp-285. Residues Arg-146, Lys-170, His-237, Arg-240, and His-263 contribute to the active site. Tyr-272 serves as the catalytic O-(3'-phospho-DNA)-tyrosine intermediate.

This sequence belongs to the 'phage' integrase family. XerC subfamily. As to quaternary structure, forms a cyclic heterotetrameric complex composed of two molecules of XerC and two molecules of XerD.

Its subcellular location is the cytoplasm. Site-specific tyrosine recombinase, which acts by catalyzing the cutting and rejoining of the recombining DNA molecules. The XerC-XerD complex is essential to convert dimers of the bacterial chromosome into monomers to permit their segregation at cell division. It also contributes to the segregational stability of plasmids. This is Tyrosine recombinase XerC from Pseudomonas aeruginosa (strain LESB58).